Here is a 196-residue protein sequence, read N- to C-terminus: Rac-like GTP-binding protein RAC13 (196 aa).

13–20 is a binding site for GTP; the sequence is GDGAVGKT. The Effector region motif lies at 35–43; the sequence is YVPTVFDNF. GTP-binding positions include 60 to 64 and 118 to 121; these read DTAGQ and TKLD. Residue Cys-193 is modified to Cysteine methyl ester. Cys-193 is lipidated: S-geranylgeranyl cysteine. The propeptide at 194–196 is removed in mature form; the sequence is AFL.

The protein belongs to the small GTPase superfamily. Rho family.

The protein localises to the cytoplasm. The protein resides in the membrane. Could participate in a signal transduction pathway that controls cytoskeletal organization. Its function is as follows. Inactive GDP-bound Rho GTPases reside in the cytosol, are found in a complex with Rho GDP-dissociation inhibitors (Rho GDIs), and are released from the GDI protein in order to translocate to membranes upon activation. The protein is Rac-like GTP-binding protein RAC13 (RAC13) of Gossypium hirsutum (Upland cotton).